Consider the following 133-residue polypeptide: Small ribosomal subunit protein uS8 (133 aa).

This sequence belongs to the universal ribosomal protein uS8 family. As to quaternary structure, part of the 30S ribosomal subunit. Contacts proteins S5 and S12.

Its function is as follows. One of the primary rRNA binding proteins, it binds directly to 16S rRNA central domain where it helps coordinate assembly of the platform of the 30S subunit. In Salinibacter ruber (strain DSM 13855 / M31), this protein is Small ribosomal subunit protein uS8.